Reading from the N-terminus, the 226-residue chain is MPGGPGVLQALPATIFLLFLLSAVYLGPGCQALWMHKVPASLMVSLGEDAHFQCPHNSSNNANVTWWRVLHGNYTWPPEFLGPGEDPNGTLIIQNVNKSHGGIYVCRVQEGNESYQQSCGTYLRVRQPPPRPFLDMGEGTKNRIITAEGIILLFCAVVPGTLLLFRKRWQNEKLGLDAGDEYEDENLYEGLNLDDCSMYEDISRGLQGTYQDVGSLNIGDVQLEKP.

The signal sequence occupies residues 1–32 (MPGGPGVLQALPATIFLLFLLSAVYLGPGCQA). Residues 33–116 (LWMHKVPASL…RVQEGNESYQ (84 aa)) form the Ig-like C2-type domain. Residues 33 to 143 (LWMHKVPASL…LDMGEGTKNR (111 aa)) are Extracellular-facing. C54 and C106 are joined by a disulfide. N-linked (GlcNAc...) asparagine glycans are attached at residues N57, N63, N73, N88, N97, and N112. The helical transmembrane segment at 144 to 165 (IITAEGIILLFCAVVPGTLLLF) threads the bilayer. Over 166 to 226 (RKRWQNEKLG…NIGDVQLEKP (61 aa)) the chain is Cytoplasmic. Residues 177-205 (DAGDEYEDENLYEGLNLDDCSMYEDISRG) enclose the ITAM domain. Residues Y188 and Y199 each carry the phosphotyrosine; by SRC-type Tyr-kinases modification. Asymmetric dimethylarginine; by PRMT1 is present on R204. A Phosphotyrosine; by Tyr-kinases modification is found at Y210.

In terms of assembly, heterodimer of alpha and beta chains; disulfide-linked. Part of the B-cell antigen receptor complex where the alpha/beta chain heterodimer is non-covalently associated with an antigen-specific membrane-bound surface immunoglobulin of two heavy chains and two light chains. Interacts through its phosphorylated ITAM domain with the SH2 domains of SYK which stimulates SYK autophosphorylation and activation. Also interacts, when phosphorylated on Tyr-210, with the SH2 domain of BLNK/SLP65, bringing BLNK into proximity with SYK and allowing SYK to phosphorylate BLNK which is necessary for trafficking of the BCR to late endosomes. Interacts with Src-family tyrosine kinases including FYN and LYN, increasing their activity. In terms of processing, phosphorylated on tyrosine, serine and threonine residues upon B-cell activation. Phosphorylation of tyrosine residues by Src-family kinases is an early and essential feature of the BCR signaling cascade. The phosphorylated tyrosines serve as docking sites for SH2-domain containing kinases, leading to their activation which in turn leads to phosphorylation of downstream targets. Phosphorylated by LYN. Phosphorylation of serine and threonine residues may prevent subsequent tyrosine phosphorylation. Arginine methylation in the ITAM domain may interfere with the binding of SYK. It promotes signals leading to B-cell differentiation. B-cells.

The protein resides in the cell membrane. Required in cooperation with CD79B for initiation of the signal transduction cascade activated by binding of antigen to the B-cell antigen receptor complex (BCR) which leads to internalization of the complex, trafficking to late endosomes and antigen presentation. Also required for BCR surface expression and for efficient differentiation of pro- and pre-B-cells. Stimulates SYK autophosphorylation and activation. Binds to BLNK, bringing BLNK into proximity with SYK and allowing SYK to phosphorylate BLNK. Also interacts with and increases activity of some Src-family tyrosine kinases. Represses BCR signaling during development of immature B-cells. This is B-cell antigen receptor complex-associated protein alpha chain (CD79A) from Homo sapiens (Human).